Reading from the N-terminus, the 213-residue chain is uncharacterized protein (213 aa).

Positions 53, 74, and 96 each coordinate S-adenosyl-L-methionine.

The protein belongs to the methyltransferase superfamily. YrrT family.

Its function is as follows. Could be a S-adenosyl-L-methionine-dependent methyltransferase. This is an uncharacterized protein from Oceanobacillus iheyensis (strain DSM 14371 / CIP 107618 / JCM 11309 / KCTC 3954 / HTE831).